We begin with the raw amino-acid sequence, 125 residues long: S-adenosylmethionine decarboxylase proenzyme (125 aa).

The active-site Schiff-base intermediate with substrate; via pyruvic acid is the S71. S71 is modified (pyruvic acid (Ser); by autocatalysis). The active-site Proton acceptor; for processing activity is the H76. C91 functions as the Proton donor; for catalytic activity in the catalytic mechanism.

The protein belongs to the prokaryotic AdoMetDC family. Type 1 subfamily. In terms of assembly, heterotetramer of two alpha and two beta chains arranged as a dimer of alpha/beta heterodimers. Requires pyruvate as cofactor. In terms of processing, is synthesized initially as an inactive proenzyme. Formation of the active enzyme involves a self-maturation process in which the active site pyruvoyl group is generated from an internal serine residue via an autocatalytic post-translational modification. Two non-identical subunits are generated from the proenzyme in this reaction, and the pyruvate is formed at the N-terminus of the alpha chain, which is derived from the carboxyl end of the proenzyme. The post-translation cleavage follows an unusual pathway, termed non-hydrolytic serinolysis, in which the side chain hydroxyl group of the serine supplies its oxygen atom to form the C-terminus of the beta chain, while the remainder of the serine residue undergoes an oxidative deamination to produce ammonia and the pyruvoyl group blocking the N-terminus of the alpha chain.

It carries out the reaction S-adenosyl-L-methionine + H(+) = S-adenosyl 3-(methylsulfanyl)propylamine + CO2. It functions in the pathway amine and polyamine biosynthesis; S-adenosylmethioninamine biosynthesis; S-adenosylmethioninamine from S-adenosyl-L-methionine: step 1/1. In terms of biological role, catalyzes the decarboxylation of S-adenosylmethionine to S-adenosylmethioninamine (dcAdoMet), the propylamine donor required for the synthesis of the polyamines spermine and spermidine from the diamine putrescine. The sequence is that of S-adenosylmethionine decarboxylase proenzyme from Pyrobaculum islandicum (strain DSM 4184 / JCM 9189 / GEO3).